The following is a 464-amino-acid chain: D-inositol 3-phosphate glycosyltransferase (464 aa).

Basic and acidic residues predominate over residues 1–20 (MEGAPRRPDRHARSEEERHV). The interval 1–44 (MEGAPRRPDRHARSEEERHVSQYASRLGRRSPAAPTRRRMLRKP) is disordered. H53 contacts 1D-myo-inositol 3-phosphate. UDP-N-acetyl-alpha-D-glucosamine contacts are provided by residues 59–60 (QP) and G67. 1D-myo-inositol 3-phosphate-binding positions include 64–69 (DAGGMN), K122, Y155, T179, and R199. 3 residues coordinate UDP-N-acetyl-alpha-D-glucosamine: R274, K279, and V340. Residues F349, R350, and A352 each coordinate Mg(2+). Residues E362 and E370 each contribute to the UDP-N-acetyl-alpha-D-glucosamine site. A Mg(2+)-binding site is contributed by T376.

Belongs to the glycosyltransferase group 1 family. MshA subfamily. Homodimer.

It catalyses the reaction 1D-myo-inositol 3-phosphate + UDP-N-acetyl-alpha-D-glucosamine = 1D-myo-inositol 2-acetamido-2-deoxy-alpha-D-glucopyranoside 3-phosphate + UDP + H(+). Functionally, catalyzes the transfer of a N-acetyl-glucosamine moiety to 1D-myo-inositol 3-phosphate to produce 1D-myo-inositol 2-acetamido-2-deoxy-glucopyranoside 3-phosphate in the mycothiol biosynthesis pathway. The protein is D-inositol 3-phosphate glycosyltransferase of Streptomyces avermitilis (strain ATCC 31267 / DSM 46492 / JCM 5070 / NBRC 14893 / NCIMB 12804 / NRRL 8165 / MA-4680).